Consider the following 197-residue polypeptide: FMN-dependent NADH:quinone oxidoreductase (197 aa).

Position 10 (Ser10) interacts with FMN.

This sequence belongs to the azoreductase type 1 family. In terms of assembly, homodimer. The cofactor is FMN.

It catalyses the reaction 2 a quinone + NADH + H(+) = 2 a 1,4-benzosemiquinone + NAD(+). The enzyme catalyses N,N-dimethyl-1,4-phenylenediamine + anthranilate + 2 NAD(+) = 2-(4-dimethylaminophenyl)diazenylbenzoate + 2 NADH + 2 H(+). In terms of biological role, quinone reductase that provides resistance to thiol-specific stress caused by electrophilic quinones. Its function is as follows. Also exhibits azoreductase activity. Catalyzes the reductive cleavage of the azo bond in aromatic azo compounds to the corresponding amines. This chain is FMN-dependent NADH:quinone oxidoreductase, found in Mycoplasma pneumoniae (strain ATCC 29342 / M129 / Subtype 1) (Mycoplasmoides pneumoniae).